Consider the following 166-residue polypeptide: ATP synthase subunit b 1 (166 aa).

The helical transmembrane segment at 7-29 threads the bilayer; that stretch reads FWTALAFVLFFVIFGRKLWVAIT.

Belongs to the ATPase B chain family. F-type ATPases have 2 components, F(1) - the catalytic core - and F(0) - the membrane proton channel. F(1) has five subunits: alpha(3), beta(3), gamma(1), delta(1), epsilon(1). F(0) has three main subunits: a(1), b(2) and c(10-14). The alpha and beta chains form an alternating ring which encloses part of the gamma chain. F(1) is attached to F(0) by a central stalk formed by the gamma and epsilon chains, while a peripheral stalk is formed by the delta and b chains.

The protein resides in the cell inner membrane. F(1)F(0) ATP synthase produces ATP from ADP in the presence of a proton or sodium gradient. F-type ATPases consist of two structural domains, F(1) containing the extramembraneous catalytic core and F(0) containing the membrane proton channel, linked together by a central stalk and a peripheral stalk. During catalysis, ATP synthesis in the catalytic domain of F(1) is coupled via a rotary mechanism of the central stalk subunits to proton translocation. In terms of biological role, component of the F(0) channel, it forms part of the peripheral stalk, linking F(1) to F(0). This chain is ATP synthase subunit b 1, found in Gluconobacter oxydans (strain 621H) (Gluconobacter suboxydans).